A 505-amino-acid polypeptide reads, in one-letter code: Alpha-1-syntrophin (505 aa).

Disordered regions lie at residues 1 to 25 (MASG…GAGG) and 40 to 77 (LTVS…PPQL). 2 PH domains span residues 6 to 269 (RAPR…AQVN) and 293 to 401 (DIKQ…DGCH). One can recognise a PDZ domain in the interval 87 to 170 (RVTVRKADAG…EVVLEVKYMK (84 aa)). 5 positions are modified to phosphoserine: serine 101, serine 184, serine 189, serine 193, and serine 200. Residues 180–210 (TGGTSVGWDSPPASPLQRQPSSPGPTPRNFS) form a disordered region. The SU domain occupies 449–505 (PFEKLQMSSDDGASLLFLDFGGAEGEIQLDLHSCPKTIVFIIHSFLSAKVTRLGLLA). The interval 483-505 (PKTIVFIIHSFLSAKVTRLGLLA) is calmodulin-binding.

The protein belongs to the syntrophin family. In terms of assembly, monomer and homodimer. Interacts with the other members of the syntrophin family SNTB1 and SNTB2; SGCG and SGCA of the dystrophin glycoprotein complex; NOS1; GRB2; the sodium channel proteins SCN4A and SCN5A; F-actin and calmodulin. Interacts with dystrophin protein DMD and related proteins DTNA and UTRN and with MAPK12, TGFA and GA. Interacts with MYOC; regulates muscle hypertrophy. Interacts with DTNB. Phosphorylated by CaM-kinase II. Phosphorylation may inhibit the interaction with DMD. In terms of tissue distribution, high expression in skeletal muscle and heart. Low expression in brain, pancreas, liver, kidney and lung. Not detected in placenta.

It is found in the cell membrane. The protein resides in the sarcolemma. The protein localises to the cell junction. Its subcellular location is the cytoplasm. It localises to the cytoskeleton. In terms of biological role, adapter protein that binds to and probably organizes the subcellular localization of a variety of membrane proteins. May link various receptors to the actin cytoskeleton and the extracellular matrix via the dystrophin glycoprotein complex. Plays an important role in synapse formation and in the organization of UTRN and acetylcholine receptors at the neuromuscular synapse. Binds to phosphatidylinositol 4,5-bisphosphate. This is Alpha-1-syntrophin (SNTA1) from Homo sapiens (Human).